The primary structure comprises 485 residues: Glutamyl-tRNA(Gln) amidotransferase subunit A (485 aa).

Active-site charge relay system residues include lysine 78 and serine 153. The active-site Acyl-ester intermediate is the serine 177.

This sequence belongs to the amidase family. GatA subfamily. As to quaternary structure, heterotrimer of A, B and C subunits.

The catalysed reaction is L-glutamyl-tRNA(Gln) + L-glutamine + ATP + H2O = L-glutaminyl-tRNA(Gln) + L-glutamate + ADP + phosphate + H(+). In terms of biological role, allows the formation of correctly charged Gln-tRNA(Gln) through the transamidation of misacylated Glu-tRNA(Gln) in organisms which lack glutaminyl-tRNA synthetase. The reaction takes place in the presence of glutamine and ATP through an activated gamma-phospho-Glu-tRNA(Gln). This is Glutamyl-tRNA(Gln) amidotransferase subunit A from Trichlorobacter lovleyi (strain ATCC BAA-1151 / DSM 17278 / SZ) (Geobacter lovleyi).